Here is a 156-residue protein sequence, read N- to C-terminus: Ribosomal RNA large subunit methyltransferase H (156 aa).

Residues Leu-73, Gly-104, and 123 to 128 (LSPLTL) each bind S-adenosyl-L-methionine.

This sequence belongs to the RNA methyltransferase RlmH family. As to quaternary structure, homodimer.

Its subcellular location is the cytoplasm. The enzyme catalyses pseudouridine(1915) in 23S rRNA + S-adenosyl-L-methionine = N(3)-methylpseudouridine(1915) in 23S rRNA + S-adenosyl-L-homocysteine + H(+). In terms of biological role, specifically methylates the pseudouridine at position 1915 (m3Psi1915) in 23S rRNA. This chain is Ribosomal RNA large subunit methyltransferase H, found in Yersinia enterocolitica serotype O:8 / biotype 1B (strain NCTC 13174 / 8081).